The chain runs to 249 residues: Ribitol 2-dehydrogenase (249 aa).

20–43 (TGAASGIGLECARTLLGAGAKVVL) contacts NAD(+). The active-site Proton acceptor is the Tyr-160.

This sequence belongs to the short-chain dehydrogenases/reductases (SDR) family. In terms of assembly, homotetramer.

It carries out the reaction ribitol + NAD(+) = D-ribulose + NADH + H(+). The sequence is that of Ribitol 2-dehydrogenase (rbtD) from Klebsiella aerogenes (Enterobacter aerogenes).